The chain runs to 505 residues: Probable cytosol aminopeptidase (505 aa).

Residues K269 and D274 each coordinate Mn(2+). Residue K281 is part of the active site. 3 residues coordinate Mn(2+): D292, D351, and E353. R355 is an active-site residue.

It belongs to the peptidase M17 family. It depends on Mn(2+) as a cofactor.

It localises to the cytoplasm. The catalysed reaction is Release of an N-terminal amino acid, Xaa-|-Yaa-, in which Xaa is preferably Leu, but may be other amino acids including Pro although not Arg or Lys, and Yaa may be Pro. Amino acid amides and methyl esters are also readily hydrolyzed, but rates on arylamides are exceedingly low.. It carries out the reaction Release of an N-terminal amino acid, preferentially leucine, but not glutamic or aspartic acids.. Presumably involved in the processing and regular turnover of intracellular proteins. Catalyzes the removal of unsubstituted N-terminal amino acids from various peptides. The chain is Probable cytosol aminopeptidase from Rhodococcus jostii (strain RHA1).